A 288-amino-acid polypeptide reads, in one-letter code: MTALITQFWQQVETALKTANPQEKCRLVNDLYDNLLPQIQLIKLEDFPEIVPQDNIAAFPEKPLLVAPKDVPKRSFATEEGYAATLHAIAHIEFNAINLGLDAAWRFGRNAQEELGEGLAFVKDWLRVAREESTHFSLVNEHLKTLGYQYGDFEAHAGLWEMAQATAHDIWERMALVPRVLEARGLDATPVLQEKIAQRKDFAAVNILDIILRDEIGHVYIGNHWYHALSKKRGLDAMKCFTELLHKYRIVIFKGVINTDARIQAGFTQHELDWIYEVEQTLKSYIKK.

This is an uncharacterized protein from Haemophilus influenzae (strain ATCC 51907 / DSM 11121 / KW20 / Rd).